Reading from the N-terminus, the 359-residue chain is tRNA N6-adenosine threonylcarbamoyltransferase (359 aa).

Fe cation-binding residues include histidine 115 and histidine 119. Residues 137–141, aspartate 170, glycine 183, and asparagine 283 each bind substrate; that span reads LVSGG. Residue aspartate 311 participates in Fe cation binding. Positions 328-359 are disordered; that stretch reads APDSLDIAPRSRWPLDEKSAPVFGTGRRGAKA.

Belongs to the KAE1 / TsaD family. It depends on Fe(2+) as a cofactor.

The protein resides in the cytoplasm. The catalysed reaction is L-threonylcarbamoyladenylate + adenosine(37) in tRNA = N(6)-L-threonylcarbamoyladenosine(37) in tRNA + AMP + H(+). Required for the formation of a threonylcarbamoyl group on adenosine at position 37 (t(6)A37) in tRNAs that read codons beginning with adenine. Is involved in the transfer of the threonylcarbamoyl moiety of threonylcarbamoyl-AMP (TC-AMP) to the N6 group of A37, together with TsaE and TsaB. TsaD likely plays a direct catalytic role in this reaction. The polypeptide is tRNA N6-adenosine threonylcarbamoyltransferase (Brucella suis (strain ATCC 23445 / NCTC 10510)).